The chain runs to 430 residues: Trigger factor (430 aa).

A PPIase FKBP-type domain is found at 164–249 (DDWAVIDHEG…LKALKTRQLP (86 aa)).

Belongs to the FKBP-type PPIase family. Tig subfamily.

The protein localises to the cytoplasm. The enzyme catalyses [protein]-peptidylproline (omega=180) = [protein]-peptidylproline (omega=0). Its function is as follows. Involved in protein export. Acts as a chaperone by maintaining the newly synthesized protein in an open conformation. Functions as a peptidyl-prolyl cis-trans isomerase. This is Trigger factor from Anaeromyxobacter sp. (strain Fw109-5).